The primary structure comprises 501 residues: Probable cytochrome P450 6a20 (501 aa).

Cys445 serves as a coordination point for heme.

Belongs to the cytochrome P450 family. Requires heme as cofactor.

The protein localises to the endoplasmic reticulum membrane. It localises to the microsome membrane. May be involved in the metabolism of insect hormones and in the breakdown of synthetic insecticides. The protein is Probable cytochrome P450 6a20 (Cyp6a20) of Drosophila melanogaster (Fruit fly).